The sequence spans 268 residues: Undecaprenyl-diphosphatase (268 aa).

8 helical membrane passes run 9-29 (VILG…TGHL), 47-67 (FDVL…FAKL), 83-103 (FIIG…AAGS), 107-127 (LFLF…AVLL), 144-164 (FPVL…IPGV), 184-204 (AAEF…VYDL), 218-238 (IVAV…KTFL), and 246-266 (FQLF…ALAM).

This sequence belongs to the UppP family.

It localises to the cell inner membrane. The catalysed reaction is di-trans,octa-cis-undecaprenyl diphosphate + H2O = di-trans,octa-cis-undecaprenyl phosphate + phosphate + H(+). Catalyzes the dephosphorylation of undecaprenyl diphosphate (UPP). Confers resistance to bacitracin. The chain is Undecaprenyl-diphosphatase from Rhodopseudomonas palustris (strain HaA2).